Here is a 35-residue protein sequence, read N- to C-terminus: Potassium channel toxin alpha-KTx 23.2 (35 aa).

3 disulfides stabilise this stretch: cysteine 6–cysteine 26, cysteine 12–cysteine 31, and cysteine 16–cysteine 33.

It belongs to the short scorpion toxin superfamily. Potassium channel inhibitor family. Alpha-KTx 23 subfamily. Expressed by the venom gland.

Its subcellular location is the secreted. Functionally, selectively and irreversibly binds (K(d)=2.9 pM) and blocks Kv1.3/KCNA3 potassium channels of human T-lymphocytes. Weakly blocks Kv1.2/KCNA2 (9%). The chain is Potassium channel toxin alpha-KTx 23.2 from Vaejovis mexicanus smithi (Mexican scorpion).